The following is a 262-amino-acid chain: Thrombin-like enzyme gyroxin B1.4 (262 aa).

The N-terminal stretch at 1-18 (MVLIRVLANLLILQLSYA) is a signal peptide. Residues 19–262 (QKSSELVIGG…AGNTIVNCPP (244 aa)) constitute a propeptide that is removed on maturation. Residues 25–253 (VIGGDECNIN…HLDWIQSIIA (229 aa)) form the Peptidase S1 domain. Intrachain disulfides connect C31/C165, C52/C68, C102/C260, C144/C214, C176/C193, and C204/C229. Residue H67 is the Charge relay system of the active site. Residue N105 is glycosylated (N-linked (GlcNAc...) asparagine). D112 serves as the catalytic Charge relay system. S208 acts as the Charge relay system in catalysis.

The protein belongs to the peptidase S1 family. Snake venom subfamily. As to quaternary structure, monomer. In terms of tissue distribution, expressed by the venom gland.

Its subcellular location is the secreted. Thrombin-like snake venom serine protease. Displays a specificity similar to trypsin. Releases only fibrinopeptide A in the conversion of fibrinogen to fibrin. Shows coagulant, esterase and amidase activities. Reversibly increases the permeability of the blood brain barrier (BBB) in mice. Induces the barrel rotation syndrome in mice, which is manifested by gyroxin-like, rapid rolling motions. This syndrome may be due to its effect on BBB permeability, and certainly also to other actions affecting endogenous substrates present in the endothelium, nervous tissues or blood. The chain is Thrombin-like enzyme gyroxin B1.4 from Crotalus durissus terrificus (South American rattlesnake).